A 179-amino-acid chain; its full sequence is Adenine phosphoribosyltransferase (179 aa).

Belongs to the purine/pyrimidine phosphoribosyltransferase family. As to quaternary structure, homodimer.

The protein localises to the cytoplasm. It catalyses the reaction AMP + diphosphate = 5-phospho-alpha-D-ribose 1-diphosphate + adenine. Its pathway is purine metabolism; AMP biosynthesis via salvage pathway; AMP from adenine: step 1/1. Catalyzes a salvage reaction resulting in the formation of AMP, that is energically less costly than de novo synthesis. The polypeptide is Adenine phosphoribosyltransferase (Histophilus somni (strain 129Pt) (Haemophilus somnus)).